A 298-amino-acid chain; its full sequence is Ribosomal RNA small subunit methyltransferase H (298 aa).

S-adenosyl-L-methionine contacts are provided by residues 35-37, Asp-55, Phe-82, Asp-100, and Gln-107; that span reads GGH.

The protein belongs to the methyltransferase superfamily. RsmH family.

The protein localises to the cytoplasm. It carries out the reaction cytidine(1402) in 16S rRNA + S-adenosyl-L-methionine = N(4)-methylcytidine(1402) in 16S rRNA + S-adenosyl-L-homocysteine + H(+). In terms of biological role, specifically methylates the N4 position of cytidine in position 1402 (C1402) of 16S rRNA. The chain is Ribosomal RNA small subunit methyltransferase H from Chlamydia felis (strain Fe/C-56) (Chlamydophila felis).